The following is a 501-amino-acid chain: Glycosyltransferase family 92 protein F13G3.3 (501 aa).

The chain crosses the membrane as a helical span at residues 10-30; sequence LSVVLLFSFLFFVTAVLLQFI. Residues 151–439 form the GT92 domain; that stretch reads KPVVMCISPL…ISDCYKQSYY (289 aa).

Belongs to the glycosyltransferase 92 family.

It is found in the membrane. This is Glycosyltransferase family 92 protein F13G3.3 from Caenorhabditis elegans.